The chain runs to 66 residues: Large ribosomal subunit protein bL33c (66 aa).

The protein belongs to the bacterial ribosomal protein bL33 family.

The protein localises to the plastid. The protein resides in the chloroplast. This chain is Large ribosomal subunit protein bL33c, found in Helianthus annuus (Common sunflower).